The following is a 199-amino-acid chain: Guanylate kinase (199 aa).

Positions 19–198 (VTVAVVSGPT…AVAHLVELLS (180 aa)) constitute a Guanylate kinase-like domain. 26-33 (GPTAVGKG) is a binding site for ATP.

This sequence belongs to the guanylate kinase family.

The protein localises to the cytoplasm. It catalyses the reaction GMP + ATP = GDP + ADP. Essential for recycling GMP and indirectly, cGMP. The protein is Guanylate kinase of Cutibacterium acnes (strain DSM 16379 / KPA171202) (Propionibacterium acnes).